The primary structure comprises 633 residues: 1-deoxy-D-xylulose-5-phosphate synthase (633 aa).

The disordered stretch occupies residues 1-22 (MPTTFHEIPRKRPTTPLLDRAQ). Thiamine diphosphate-binding positions include His-87 and 128–130 (GHS). Asp-159 is a binding site for Mg(2+). Thiamine diphosphate is bound by residues 160–161 (GA), Asn-188, Phe-295, and Glu-378. Asn-188 is a binding site for Mg(2+).

It belongs to the transketolase family. DXPS subfamily. As to quaternary structure, homodimer. Mg(2+) serves as cofactor. Requires thiamine diphosphate as cofactor.

It carries out the reaction D-glyceraldehyde 3-phosphate + pyruvate + H(+) = 1-deoxy-D-xylulose 5-phosphate + CO2. It participates in metabolic intermediate biosynthesis; 1-deoxy-D-xylulose 5-phosphate biosynthesis; 1-deoxy-D-xylulose 5-phosphate from D-glyceraldehyde 3-phosphate and pyruvate: step 1/1. Functionally, catalyzes the acyloin condensation reaction between C atoms 2 and 3 of pyruvate and glyceraldehyde 3-phosphate to yield 1-deoxy-D-xylulose-5-phosphate (DXP). In Pseudomonas fluorescens (strain ATCC BAA-477 / NRRL B-23932 / Pf-5), this protein is 1-deoxy-D-xylulose-5-phosphate synthase.